The chain runs to 467 residues: ATP synthase subunit beta (467 aa).

Residue 154–161 (GGAGVGKT) participates in ATP binding.

This sequence belongs to the ATPase alpha/beta chains family. F-type ATPases have 2 components, CF(1) - the catalytic core - and CF(0) - the membrane proton channel. CF(1) has five subunits: alpha(3), beta(3), gamma(1), delta(1), epsilon(1). CF(0) has three main subunits: a(1), b(2) and c(9-12). The alpha and beta chains form an alternating ring which encloses part of the gamma chain. CF(1) is attached to CF(0) by a central stalk formed by the gamma and epsilon chains, while a peripheral stalk is formed by the delta and b chains.

Its subcellular location is the cell inner membrane. The enzyme catalyses ATP + H2O + 4 H(+)(in) = ADP + phosphate + 5 H(+)(out). Produces ATP from ADP in the presence of a proton gradient across the membrane. The catalytic sites are hosted primarily by the beta subunits. This chain is ATP synthase subunit beta, found in Leptospira interrogans serogroup Icterohaemorrhagiae serovar copenhageni (strain Fiocruz L1-130).